A 248-amino-acid polypeptide reads, in one-letter code: MEPEETLESESSEKSLFSSQQEYEESQEAEETGAENPLLQPTLTGDVEGLQKIFEDPEHPHHEHAVQLLLEEDIVGRNLLYAACMAGKSDVIKALAKYGVNLNEATARGYTLLHCAAAWGRLETLKALVELDVDIEALNFRGEKARDVAARYSQVECVNFLDWADARLILKKIITKSSLIITDPEKGPGKLFKEDKSTILNACRLKNEWLESHPEASISEIFEQKQQLEDIVSPILAKMSTPRHFAAS.

2 stretches are compositionally biased toward acidic residues: residues 1 to 10 and 22 to 33; these read MEPEETLESE and EYEESQEAEETG. Residues 1 to 42 form a disordered region; that stretch reads MEPEETLESESSEKSLFSSQQEYEESQEAEETGAENPLLQPT. ANK repeat units follow at residues 75-104 and 108-137; these read VGRN…NLNE and RGYT…DIEA.

The protein resides in the cytoplasm. The protein localises to the midbody. Its subcellular location is the midbody ring. It is found in the cleavage furrow. Its function is as follows. May play a role during cell division. The polypeptide is Ankyrin repeat domain-containing protein 45 (Ankrd45) (Mus musculus (Mouse)).